A 133-amino-acid polypeptide reads, in one-letter code: Small ribosomal subunit protein uS9 (133 aa).

Belongs to the universal ribosomal protein uS9 family.

The chain is Small ribosomal subunit protein uS9 from Ureaplasma urealyticum serovar 10 (strain ATCC 33699 / Western).